Consider the following 219-residue polypeptide: 7-cyano-7-deazaguanine synthase (219 aa).

Residue 10 to 20 coordinates ATP; the sequence is FSGGQDSTTCL. 4 residues coordinate Zn(2+): Cys188, Cys197, Cys200, and Cys203.

This sequence belongs to the QueC family. Homodimer. Requires Zn(2+) as cofactor.

It catalyses the reaction 7-carboxy-7-deazaguanine + NH4(+) + ATP = 7-cyano-7-deazaguanine + ADP + phosphate + H2O + H(+). The protein operates within purine metabolism; 7-cyano-7-deazaguanine biosynthesis. In terms of biological role, catalyzes the ATP-dependent conversion of 7-carboxy-7-deazaguanine (CDG) to 7-cyano-7-deazaguanine (preQ(0)). This Clostridium botulinum (strain 657 / Type Ba4) protein is 7-cyano-7-deazaguanine synthase.